The sequence spans 2178 residues: Streptococcal hemagglutinin (2178 aa).

The signal sequence occupies residues 1-90 (MFFKRQKGQY…AVVTSSSVYA (90 aa)). Residues 91 to 137 (EEEQALEKVIDTRDVLATRGEAVLSEEAATTLSSEGANPVESLSDTL) form a non-repeat region 1 (NR1) region. Residues 138-219 (SASESASANS…SLISSDSSNS (82 aa)) are ser-rich region 1 (SR1). Residues 192–244 (TSQSFSSTTSSTQSSNNESLISSDSSNSLNTNQSVSARNQNARVRTRRAVAAN) are compositionally biased toward low complexity. Disordered stretches follow at residues 192–246 (TSQS…ANDT), 495–557 (VSAS…SVSA), 584–653 (SAST…SVSA), 836–857 (SASTSASVSASESASTSASVSA), 884–917 (SASTSASVSASESASTSASVSASESASTSASVSA), 944–993 (SAST…SESA), 1020–1289 (SASV…SVSA), 1341–1390 (ASTS…ESAS), 1488–1685 (SASV…SVSA), 1725–1901 (ASTS…SAST), and 2119–2151 (LSQSLSDSQSTSATQSMHDRISKGQLPRTGESE). The non-repeat region 2 (NR2) stretch occupies residues 220 to 449 (LNTNQSVSAR…ANRVVKDLQI (230 aa)). Residues 450–2143 (SKSNSASQSS…SMHDRISKGQ (1694 aa)) form a ser-rich region 2 (SR2) region. Residues 2119–2130 (LSQSLSDSQSTS) are compositionally biased toward low complexity. Residues 2144 to 2148 (LPRTG) carry the LPXTG sorting signal motif. Position 2147 is a pentaglycyl murein peptidoglycan amidated threonine (Thr2147). Residues 2148 to 2178 (GESESKASILALGIGALGLAFKKRKKNESED) constitute a propeptide, removed by sortase.

This sequence belongs to the serine-rich repeat protein (SRRP) family. In terms of processing, the protein is glycosylated in vivo; constructs without SR1 and SR2 are not glycosylated.

It is found in the secreted. Its subcellular location is the cell wall. In terms of biological role, a cell wall protein involved with PadA in host cell interactions required for colonization and pathogensis. Mediates hemagglutination and adherence to ghst glycoproteins. Recognizes fetuin-A (AHSG), a highly glycosylated human plasma protein, also involved in recognition of human platelets, probably via platelet glycoprotein Ib alpha (GP1BA). Acts in concert with PadA to promote binding to glycosylated human fibronectin (FN1) and vitronectin (VTN), and biofilm formation. Plays a major role in fibronectin and vitronectin binding; binding is mediated by glycosylated regions. Probably mediates interaction of PadA with resting platelets. In Streptococcus gordonii (strain Challis / ATCC 35105 / BCRC 15272 / CH1 / DL1 / V288), this protein is Streptococcal hemagglutinin.